The primary structure comprises 494 residues: Protein nucleotidyltransferase YdiU (494 aa).

ATP is bound by residues G101, G103, R104, K123, D135, G136, R186, and R193. D262 functions as the Proton acceptor in the catalytic mechanism. Residues N263 and D272 each contribute to the Mg(2+) site. D272 contributes to the ATP binding site.

It belongs to the SELO family. The cofactor is Mg(2+). Requires Mn(2+) as cofactor.

It carries out the reaction L-seryl-[protein] + ATP = 3-O-(5'-adenylyl)-L-seryl-[protein] + diphosphate. The enzyme catalyses L-threonyl-[protein] + ATP = 3-O-(5'-adenylyl)-L-threonyl-[protein] + diphosphate. The catalysed reaction is L-tyrosyl-[protein] + ATP = O-(5'-adenylyl)-L-tyrosyl-[protein] + diphosphate. It catalyses the reaction L-histidyl-[protein] + UTP = N(tele)-(5'-uridylyl)-L-histidyl-[protein] + diphosphate. It carries out the reaction L-seryl-[protein] + UTP = O-(5'-uridylyl)-L-seryl-[protein] + diphosphate. The enzyme catalyses L-tyrosyl-[protein] + UTP = O-(5'-uridylyl)-L-tyrosyl-[protein] + diphosphate. Its function is as follows. Nucleotidyltransferase involved in the post-translational modification of proteins. It can catalyze the addition of adenosine monophosphate (AMP) or uridine monophosphate (UMP) to a protein, resulting in modifications known as AMPylation and UMPylation. The polypeptide is Protein nucleotidyltransferase YdiU (Chromohalobacter salexigens (strain ATCC BAA-138 / DSM 3043 / CIP 106854 / NCIMB 13768 / 1H11)).